Reading from the N-terminus, the 231-residue chain is Nuclear transcription factor Y subunit C-9 (231 aa).

Residues 211-231 (NPYMGQPMWQQQAPDQPDQEN) are disordered.

The protein belongs to the NFYC/HAP5 subunit family. As to quaternary structure, heterotrimeric transcription factor composed of three components, NF-YA, NF-YB and NF-YC. Interacts with NFYA2, NFYB2, CO and RGA. Interacts with REF6 (via N-terminus). As to expression, ubiquitous. Present in etiolated seedlings.

The protein resides in the nucleus. Stimulates the transcription of various genes by recognizing and binding to a CCAAT motif in promoters. Interacts with REF6 to directly regulate SOC1 transcription in response to flowering signals from photoperiod and gibberellic acid pathways. This Arabidopsis thaliana (Mouse-ear cress) protein is Nuclear transcription factor Y subunit C-9 (NFYC9).